The primary structure comprises 413 residues: Terephthalate 1,2-dioxygenase, terminal oxygenase component subunit alpha 2 (413 aa).

A Rieske domain is found at 41 to 144 (NYLCLESEIP…CKEEHGPRKL (104 aa)). [2Fe-2S] cluster contacts are provided by C82, H84, C102, and H105.

It belongs to the bacterial ring-hydroxylating dioxygenase alpha subunit family. Heterotetramer composed of 2 alpha (TphA2I and TphA2II) and 2 beta (TphA3I and TphA3II) subunits. Part of a multicomponent enzyme system composed of a reductase (TphA1I or TphA1II) and a two-subunit oxygenase component (TphA2I or TphA2II and TphA3I or TphA3II). Requires Fe cation as cofactor. [2Fe-2S] cluster serves as cofactor.

It catalyses the reaction terephthalate + NADH + O2 + H(+) = (3S,4R)-3,4-dihydroxycyclohexa-1,5-diene-1,4-dicarboxylate + NAD(+). With respect to regulation, inhibited by EDTA. Component of the terephthalate 1,2-dioxygenase multicomponent enzyme system which catalyzes the dioxygenation of terephthalate (TER/TPA) to 1,2-dihydroxy-3,5-cyclohexadiene-1,4-dicarboxylic acid (DCD). It can also use 2,5-dicarboxypyridine (PDC) and 1,4-napthalenedicarboxylic acid (NDC) as substrates, and preferentially uses NADPH which is the physiological electron donor. In Comamonas sp, this protein is Terephthalate 1,2-dioxygenase, terminal oxygenase component subunit alpha 2 (tphA2II).